The chain runs to 326 residues: GTPase Obg (326 aa).

The region spanning 1–159 is the Obg domain; sequence MKFVDSAKIY…LEIELELKLM (159 aa). The disordered stretch occupies residues 119–138; the sequence is EGGKGGKGNPHFASSTRQAP. Positions 160–323 constitute an OBG-type G domain; the sequence is ADVGLVGFPN…LKDELWSRVK (164 aa). GTP contacts are provided by residues 166–173, 191–195, 213–216, 280–283, and 304–306; these read GFPNAGKS, FTTLV, DIPG, TKMD, and SSV. Positions 173 and 193 each coordinate Mg(2+).

The protein belongs to the TRAFAC class OBG-HflX-like GTPase superfamily. OBG GTPase family. In terms of assembly, monomer. Mg(2+) is required as a cofactor.

The protein localises to the cytoplasm. An essential GTPase which binds GTP, GDP and possibly (p)ppGpp with moderate affinity, with high nucleotide exchange rates and a fairly low GTP hydrolysis rate. Plays a role in control of the cell cycle, stress response, ribosome biogenesis and in those bacteria that undergo differentiation, in morphogenesis control. This chain is GTPase Obg, found in Chlorobium phaeobacteroides (strain BS1).